The chain runs to 133 residues: Small ribosomal subunit protein uS9 (133 aa).

Positions 97–133 (MKQELKSQGFLTRDPRKKERKKYGRKKARKSFQFSKR) are disordered. A compositionally biased stretch (basic residues) spans 114-133 (KERKKYGRKKARKSFQFSKR).

This sequence belongs to the universal ribosomal protein uS9 family.

The protein is Small ribosomal subunit protein uS9 (rpsI) of Chlamydia muridarum (strain MoPn / Nigg).